Here is a 240-residue protein sequence, read N- to C-terminus: Urease accessory protein UreF (240 aa).

This sequence belongs to the UreF family. UreD, UreF and UreG form a complex that acts as a GTP-hydrolysis-dependent molecular chaperone, activating the urease apoprotein by helping to assemble the nickel containing metallocenter of UreC. The UreE protein probably delivers the nickel.

It localises to the cytoplasm. In terms of biological role, required for maturation of urease via the functional incorporation of the urease nickel metallocenter. In Bradyrhizobium sp. (strain ORS 278), this protein is Urease accessory protein UreF.